A 136-amino-acid chain; its full sequence is Protein NrdI (136 aa).

This sequence belongs to the NrdI family.

Its function is as follows. Probably involved in ribonucleotide reductase function. This chain is Protein NrdI, found in Escherichia coli O127:H6 (strain E2348/69 / EPEC).